The primary structure comprises 106 residues: Large ribosomal subunit protein eL42 (106 aa).

The protein belongs to the eukaryotic ribosomal protein eL42 family.

The polypeptide is Large ribosomal subunit protein eL42 (RPL44) (Yarrowia lipolytica (strain CLIB 122 / E 150) (Yeast)).